The primary structure comprises 108 residues: MPRESSPDSHHEHGVAVEPARPEVAPPPFYQVMLLNDDYTPMDFVVDVLQQFFTMDLDKATQVMLHVHTRGRGVCGVFTREVAETKVAQVNEYSRMNQHPLLCTMEKA.

The span at 1 to 15 shows a compositional bias: basic and acidic residues; sequence MPRESSPDSHHEHGV. The interval 1 to 24 is disordered; that stretch reads MPRESSPDSHHEHGVAVEPARPEV.

Belongs to the ClpS family. Binds to the N-terminal domain of the chaperone ClpA.

Involved in the modulation of the specificity of the ClpAP-mediated ATP-dependent protein degradation. This chain is ATP-dependent Clp protease adapter protein ClpS, found in Stenotrophomonas maltophilia (strain R551-3).